Reading from the N-terminus, the 352-residue chain is Phenylalanine--tRNA ligase alpha subunit (352 aa).

Residue glutamate 258 coordinates Mg(2+).

The protein belongs to the class-II aminoacyl-tRNA synthetase family. Phe-tRNA synthetase alpha subunit type 1 subfamily. As to quaternary structure, tetramer of two alpha and two beta subunits. Requires Mg(2+) as cofactor.

Its subcellular location is the cytoplasm. The enzyme catalyses tRNA(Phe) + L-phenylalanine + ATP = L-phenylalanyl-tRNA(Phe) + AMP + diphosphate + H(+). In Staphylococcus aureus (strain Mu3 / ATCC 700698), this protein is Phenylalanine--tRNA ligase alpha subunit.